The primary structure comprises 485 residues: Glutamate--tRNA ligase (485 aa).

The 'HIGH' region motif lies at 10–20 (PSPTGHLHIGN). Positions 253–257 (KLSKR) match the 'KMSKS' region motif. Lys-256 serves as a coordination point for ATP.

It belongs to the class-I aminoacyl-tRNA synthetase family. Glutamate--tRNA ligase type 1 subfamily. In terms of assembly, monomer.

The protein resides in the cytoplasm. It carries out the reaction tRNA(Glu) + L-glutamate + ATP = L-glutamyl-tRNA(Glu) + AMP + diphosphate. Catalyzes the attachment of glutamate to tRNA(Glu) in a two-step reaction: glutamate is first activated by ATP to form Glu-AMP and then transferred to the acceptor end of tRNA(Glu). The polypeptide is Glutamate--tRNA ligase (Enterococcus faecalis (strain ATCC 700802 / V583)).